The sequence spans 218 residues: Probable cutinase 3 (218 aa).

A signal peptide spans Met-1–Ala-17. Cystine bridges form between Cys-41/Cys-120 and Cys-67/Cys-81. Catalysis depends on Ser-131, which acts as the Nucleophile. Cysteines 182 and 189 form a disulfide. Asp-186 is an active-site residue. Residue His-199 is the Proton donor/acceptor of the active site.

This sequence belongs to the cutinase family.

It is found in the secreted. The enzyme catalyses cutin + H2O = cutin monomers.. In terms of biological role, catalyzes the hydrolysis of complex carboxylic polyesters found in the cell wall of plants. Degrades cutin, a macromolecule that forms the structure of the plant cuticle. In Aspergillus terreus (strain NIH 2624 / FGSC A1156), this protein is Probable cutinase 3.